We begin with the raw amino-acid sequence, 225 residues long: Putative amino-acid transporter YggA (225 aa).

5 helical membrane passes run 1–21 (MFAT…PIGA), 37–57 (LLTA…GVFG), 65–85 (SPIG…WFGI), 116–136 (LGVT…LGSF), and 150–170 (AVAM…AVVL).

Belongs to the LysE/ArgO transporter (TC 2.A.75) family.

Its subcellular location is the cell membrane. In Aeromonas hydrophila, this protein is Putative amino-acid transporter YggA.